The following is a 132-amino-acid chain: Small ribosomal subunit protein uS8 (132 aa).

It belongs to the universal ribosomal protein uS8 family. As to quaternary structure, part of the 30S ribosomal subunit. Contacts proteins S5 and S12.

One of the primary rRNA binding proteins, it binds directly to 16S rRNA central domain where it helps coordinate assembly of the platform of the 30S subunit. The polypeptide is Small ribosomal subunit protein uS8 (Geotalea uraniireducens (strain Rf4) (Geobacter uraniireducens)).